Consider the following 129-residue polypeptide: Small ribosomal subunit protein uS11 (129 aa).

As to quaternary structure, part of the 30S ribosomal subunit. Interacts with proteins S7 and S18. Binds to IF-3. In terms of processing, may be methylated on an undetermined residue.

Functionally, located on the platform of the 30S subunit, it bridges several disparate RNA helices of the 16S rRNA. Forms part of the Shine-Dalgarno cleft in the 70S ribosome. This is Small ribosomal subunit protein uS11 from Rhodopseudomonas palustris (strain ATCC BAA-98 / CGA009).